Reading from the N-terminus, the 149-residue chain is MAEEKKEVQKTPEQKMDELNRQLRGYMANIEALRAEISVINQSITDLRTAEATLRSLKELGKGKEVLIPVGATAQIKAKSEGVDEVIMSIGTGISAVMSYDEAVDRIRKEIAALEALRRALEEAIADLYNKIEELLEEVRKVGQEEAKK.

The protein belongs to the prefoldin subunit alpha family.

The protein localises to the cytoplasm. Functionally, molecular chaperone capable of stabilizing a range of proteins. This is Putative prefoldin subunit alpha from Aquifex aeolicus (strain VF5).